Here is a 396-residue protein sequence, read N- to C-terminus: tRNA (guanine-N(7)-)-methyltransferase non-catalytic subunit wuho (396 aa).

WD repeat units follow at residues 75-115, 162-201, 205-243, and 302-342; these read KVEV…AQLL, GHLSIVYDVLWSEDQQYIITCDRDDKIRVTNYPATFDIHS, GHKEFVSGLAMLTEQHIISASGDKTLRVWNYTCGKELLL, and AGTW…RASG.

The protein belongs to the WD repeat TRM82 family. In terms of assembly, forms a heterodimer with the catalytic subunit Mettl1. Interacts with mei-P26 and weakly interacts with bgcn; required for the function or formation of the mei-P26-bgcn-bam-sxl complex. Interacts with nanos; may be involved in mei-P26-dependent derepression of the BMP signaling pathway. Interacts with Myc; the interaction may be mediated by mei-P26 and may be involved in the regulation of ribosome biogenesis. In testis, it is present at high level in hub cells, a niche for germline stem cells of testis. Ubiquitously expressed in all testicular cells throughout spermatogenesis. Ubiquitously expressed in all germline and somatic cells of the ovary.

It localises to the nucleus. Its subcellular location is the cytoplasm. It participates in tRNA modification; N(7)-methylguanine-tRNA biosynthesis. Functionally, required for the Mettl1-dependent formation of N(7)-methylguanine at position 46 (m7G46) in tRNA. In the Mettl1-wuho methyltransferase complex, it is required to stabilize and induce conformational changes of the catalytic subunit. Required for binding of nanos mRNA and repression of translation by the mei-P26-bgcn-bam-sxl complex. May cooperate with mei-P26 and nanos to derepress the BMP signaling pathway. May cooperate with mei-P26 to suppress expression of a subset of microRNAs. May cooperate with mei-P26 to regulate bam expression levels in germline cells during gametogenesis. Required to promote mitosis to meiosis transition during gametogenesis. May regulate germline cell division in part by regulating ribosome biogenesis. This chain is tRNA (guanine-N(7)-)-methyltransferase non-catalytic subunit wuho, found in Drosophila pseudoobscura pseudoobscura (Fruit fly).